Consider the following 278-residue polypeptide: 4-diphosphocytidyl-2-C-methyl-D-erythritol kinase (278 aa).

Lys-9 is a catalytic residue. ATP is bound at residue 93 to 103 (PLGGGLGGGSS). Asp-135 is an active-site residue.

It belongs to the GHMP kinase family. IspE subfamily.

It catalyses the reaction 4-CDP-2-C-methyl-D-erythritol + ATP = 4-CDP-2-C-methyl-D-erythritol 2-phosphate + ADP + H(+). It participates in isoprenoid biosynthesis; isopentenyl diphosphate biosynthesis via DXP pathway; isopentenyl diphosphate from 1-deoxy-D-xylulose 5-phosphate: step 3/6. In terms of biological role, catalyzes the phosphorylation of the position 2 hydroxy group of 4-diphosphocytidyl-2C-methyl-D-erythritol. The chain is 4-diphosphocytidyl-2-C-methyl-D-erythritol kinase from Nitrosomonas eutropha (strain DSM 101675 / C91 / Nm57).